Consider the following 797-residue polypeptide: Leucine-rich repeat-containing protein AAC1 (797 aa).

A compositionally biased stretch (basic and acidic residues) spans 1–12; that stretch reads MKRTSNRNEEAT. 4 disordered regions span residues 1–20, 51–103, 125–148, and 307–333; these read MKRTSNRNEEATAKLSSSTT, YSLF…TTTT, NLPTTETETTTITPTLTTTTTTTT, and HSTSVPSSPPPPPPPPPPQIQQPTITA. A compositionally biased stretch (polar residues) spans 55-81; the sequence is NEPNNDNDTNSSTRPNKQQKLLKSNES. A compositionally biased stretch (low complexity) spans 82–103; it reads TTSTTTTTTPITTTTTTTTTTT. Pro residues predominate over residues 313–326; sequence SSPPPPPPPPPPQI. 10 LRR repeats span residues 376-397, 406-425, 435-456, 464-484, 492-513, 514-535, 543-564, 572-593, 601-622, and 633-653; these read KLKKINLKNIGLDSRDKFDFFS, TLETLIICDNIGDEGMQLLS, VLKRLELQKNQFTNQSAYYLNK, QLETLNLSSNRIDEQGLIMMK, SLKEFIFSKNRLGNTDSVDFGK, SITSLDLHDSMVGSKQSIKGLS, SITSLNLSFNHIGSNEAIKSLS, TLKFVDLSFNKINSNFGLDHLV, SIHSISLQSNQIDNTSAITLSQ, and PFKYLNLSGNKIGIGGLKKLI.

The polypeptide is Leucine-rich repeat-containing protein AAC1 (AAC1) (Dictyostelium discoideum (Social amoeba)).